Consider the following 343-residue polypeptide: Mas-related G-protein coupled receptor member F (343 aa).

Residues methionine 1–proline 44 are Extracellular-facing. Residue asparagine 4 is glycosylated (N-linked (GlcNAc...) asparagine). A helical transmembrane segment spans residues alanine 45–leucine 66. Topologically, residues tryptophan 67–phenylalanine 82 are cytoplasmic. A helical membrane pass occupies residues leucine 83–methionine 104. Topologically, residues glycine 105 to glycine 123 are extracellular. Residues leucine 124 to serine 144 traverse the membrane as a helical segment. Topologically, residues valine 145 to serine 160 are cytoplasmic. Residues alanine 161–phenylalanine 181 form a helical membrane-spanning segment. Residues cysteine 182–aspartate 198 are Extracellular-facing. A helical transmembrane segment spans residues isoleucine 199 to leucine 220. Over isoleucine 221–valine 241 the chain is Cytoplasmic. A helical transmembrane segment spans residues leucine 242 to tryptophan 263. Topologically, residues valine 264 to glutamate 273 are extracellular. Residues tyrosine 274 to alanine 294 traverse the membrane as a helical segment. Topologically, residues glycine 295–serine 343 are cytoplasmic. Positions alanine 318–serine 343 are disordered. Positions alanine 324–serine 343 are enriched in polar residues.

The protein belongs to the G-protein coupled receptor 1 family. Mas subfamily. As to expression, gut, vas deferens, uterus and aorta; barely detectable in liver, kidney, lung, and salivary gland. In the brain, markedly abundant in the cerebellum.

The protein resides in the cell membrane. In terms of biological role, orphan receptor. May bind to a neuropeptide and may regulate nociceptor function and/or development, including the sensation or modulation of pain. This Rattus norvegicus (Rat) protein is Mas-related G-protein coupled receptor member F (Mrgprf).